Here is a 381-residue protein sequence, read N- to C-terminus: Succinyl-diaminopimelate desuccinylase (381 aa).

Histidine 69 is a Zn(2+) binding site. Residue aspartate 71 is part of the active site. Aspartate 103 is a Zn(2+) binding site. Glutamate 137 acts as the Proton acceptor in catalysis. Glutamate 138, glutamate 166, and histidine 355 together coordinate Zn(2+).

Belongs to the peptidase M20A family. DapE subfamily. In terms of assembly, homodimer. The cofactor is Zn(2+). Co(2+) serves as cofactor.

It catalyses the reaction N-succinyl-(2S,6S)-2,6-diaminopimelate + H2O = (2S,6S)-2,6-diaminopimelate + succinate. Its pathway is amino-acid biosynthesis; L-lysine biosynthesis via DAP pathway; LL-2,6-diaminopimelate from (S)-tetrahydrodipicolinate (succinylase route): step 3/3. Functionally, catalyzes the hydrolysis of N-succinyl-L,L-diaminopimelic acid (SDAP), forming succinate and LL-2,6-diaminopimelate (DAP), an intermediate involved in the bacterial biosynthesis of lysine and meso-diaminopimelic acid, an essential component of bacterial cell walls. This Rickettsia massiliae (strain Mtu5) protein is Succinyl-diaminopimelate desuccinylase.